The chain runs to 447 residues: Cysteine--tRNA ligase (447 aa).

Cys28 contacts Zn(2+). The short motif at Pro30–Asn40 is the 'HIGH' region element. Zn(2+) contacts are provided by Cys211, His236, and Glu240. The short motif at Lys268–Ser272 is the 'KMSKS' region element. Lys271 lines the ATP pocket.

It belongs to the class-I aminoacyl-tRNA synthetase family. In terms of assembly, monomer. Zn(2+) serves as cofactor.

The protein localises to the cytoplasm. It catalyses the reaction tRNA(Cys) + L-cysteine + ATP = L-cysteinyl-tRNA(Cys) + AMP + diphosphate. This chain is Cysteine--tRNA ligase, found in Streptococcus thermophilus (strain CNRZ 1066).